The following is a 122-amino-acid chain: Large ribosomal subunit protein uL14 (122 aa).

Belongs to the universal ribosomal protein uL14 family. Part of the 50S ribosomal subunit. Forms a cluster with proteins L3 and L19. In the 70S ribosome, L14 and L19 interact and together make contacts with the 16S rRNA in bridges B5 and B8.

Binds to 23S rRNA. Forms part of two intersubunit bridges in the 70S ribosome. The chain is Large ribosomal subunit protein uL14 from Streptococcus gordonii (strain Challis / ATCC 35105 / BCRC 15272 / CH1 / DL1 / V288).